The chain runs to 95 residues: Large ribosomal subunit protein bL25 (95 aa).

The protein belongs to the bacterial ribosomal protein bL25 family. Part of the 50S ribosomal subunit; part of the 5S rRNA/L5/L18/L25 subcomplex. Contacts the 5S rRNA. Binds to the 5S rRNA independently of L5 and L18.

Functionally, this is one of the proteins that binds to the 5S RNA in the ribosome where it forms part of the central protuberance. This is Large ribosomal subunit protein bL25 from Chromobacterium violaceum (strain ATCC 12472 / DSM 30191 / JCM 1249 / CCUG 213 / NBRC 12614 / NCIMB 9131 / NCTC 9757 / MK).